A 653-amino-acid polypeptide reads, in one-letter code: Chromosomal replication initiator protein DnaA (653 aa).

Positions 1–100 (MADVPADLAA…SAGEPPASAS (100 aa)) are domain I, interacts with DnaA modulators. Positions 86 to 310 (ITVDDSAGEP…PAPATGPGEP (225 aa)) are disordered. The tract at residues 101–312 (PAPPRYEEPE…PATGPGEPTA (212 aa)) is domain II. Basic and acidic residues-rich tracts occupy residues 120–150 (DPYE…DRHQ) and 221–267 (PSYD…RRNI). A compositionally biased stretch (low complexity) spans 284–310 (GSALPASSGAPGPLAAQPAPATGPGEP). The tract at residues 313–529 (RLNPKYLFDT…GALIRVTAFA (217 aa)) is domain III, AAA+ region. Positions 357, 359, 360, and 361 each coordinate ATP. The segment at 530-653 (SLNRQPVDLG…TELTNRIKNG (124 aa)) is domain IV, binds dsDNA.

Belongs to the DnaA family. Oligomerizes as a right-handed, spiral filament on DNA at oriC.

Its subcellular location is the cytoplasm. Functionally, plays an essential role in the initiation and regulation of chromosomal replication. ATP-DnaA binds to the origin of replication (oriC) to initiate formation of the DNA replication initiation complex once per cell cycle. Binds the DnaA box (a 9 base pair repeat at the origin) and separates the double-stranded (ds)DNA. Forms a right-handed helical filament on oriC DNA; dsDNA binds to the exterior of the filament while single-stranded (ss)DNA is stabiized in the filament's interior. The ATP-DnaA-oriC complex binds and stabilizes one strand of the AT-rich DNA unwinding element (DUE), permitting loading of DNA polymerase. After initiation quickly degrades to an ADP-DnaA complex that is not apt for DNA replication. Binds acidic phospholipids. The polypeptide is Chromosomal replication initiator protein DnaA (Streptomyces avermitilis (strain ATCC 31267 / DSM 46492 / JCM 5070 / NBRC 14893 / NCIMB 12804 / NRRL 8165 / MA-4680)).